We begin with the raw amino-acid sequence, 312 residues long: DNA-directed RNA polymerase subunit alpha (312 aa).

Positions 1–226 (MIEFEKPRIE…EHLDIFVNLT (226 aa)) are alpha N-terminal domain (alpha-NTD). Residues 243 to 312 (KEKMLEMTIE…DLGLGLRKDD (70 aa)) form an alpha C-terminal domain (alpha-CTD) region.

It belongs to the RNA polymerase alpha chain family. As to quaternary structure, homodimer. The RNAP catalytic core consists of 2 alpha, 1 beta, 1 beta' and 1 omega subunit. When a sigma factor is associated with the core the holoenzyme is formed, which can initiate transcription.

The catalysed reaction is RNA(n) + a ribonucleoside 5'-triphosphate = RNA(n+1) + diphosphate. Functionally, DNA-dependent RNA polymerase catalyzes the transcription of DNA into RNA using the four ribonucleoside triphosphates as substrates. The sequence is that of DNA-directed RNA polymerase subunit alpha from Enterococcus faecalis (strain ATCC 700802 / V583).